The following is a 469-amino-acid chain: Secreted triacylglycerol lipase LIP3 (469 aa).

The first 21 residues, 1–21 (MVSLLWKFTLLCLFLLACTSA), serve as a signal peptide directing secretion. The cysteines at positions 121 and 292 are disulfide-linked. The active-site Nucleophile is Ser-205. Residue Asn-238 is glycosylated (N-linked (GlcNAc...) asparagine). Residues Asp-352 and His-386 contribute to the active site.

It belongs to the AB hydrolase superfamily. Lipase family. Class Lip subfamily.

It is found in the secreted. The enzyme catalyses a triacylglycerol + H2O = a diacylglycerol + a fatty acid + H(+). It carries out the reaction a monoacylglycerol + H2O = glycerol + a fatty acid + H(+). It catalyses the reaction a diacylglycerol + H2O = a monoacylglycerol + a fatty acid + H(+). Secreted lipase that hydrolyzes acylglycerol lipids such as triacylglycerols and consequently releases free fatty acid. Generates free oleic acid from the substrates mono- and diolein and hydrolyzes triolein in significant amounts. Due to an absence of fatty acid synthase genes in Malassezia species, secretory lipases are essential for the yeast to generate free fatty acids from degradation of sebum and assimilate them as lipid sources for growth. Plays an essential role at the pathogen-host interface during disease progression. Performs also the reverse reaction to build diacyl- and triacyl- glycerols from monoacylglycerols. The protein is Secreted triacylglycerol lipase LIP3 of Malassezia restricta (strain ATCC 96810 / NBRC 103918 / CBS 7877) (Seborrheic dermatitis infection agent).